The following is a 291-amino-acid chain: tRNA dimethylallyltransferase (291 aa).

Position 9-16 (9-16 (GTTASGKS)) interacts with ATP. 11 to 16 (TASGKS) contributes to the substrate binding site. Residues 34-37 (DSLA) are interaction with substrate tRNA.

The protein belongs to the IPP transferase family. In terms of assembly, monomer. Mg(2+) serves as cofactor.

The catalysed reaction is adenosine(37) in tRNA + dimethylallyl diphosphate = N(6)-dimethylallyladenosine(37) in tRNA + diphosphate. Functionally, catalyzes the transfer of a dimethylallyl group onto the adenine at position 37 in tRNAs that read codons beginning with uridine, leading to the formation of N6-(dimethylallyl)adenosine (i(6)A). This is tRNA dimethylallyltransferase from Campylobacter concisus (strain 13826).